The following is a 505-amino-acid chain: Band 7 protein CG42540 (505 aa).

A disordered region spans residues 1–164; sequence MPDSMMDMEH…IHRAEARRAD (164 aa). Over residues 47-60 the composition is skewed to basic and acidic residues; that stretch reads SEERDRDRDRERDH. Low complexity-rich tracts occupy residues 82–104 and 113–139; these read QLHQ…QQPQ and QQQQ…QQLP. Residues 178 to 198 form a helical membrane-spanning segment; sequence LIFLSVALVIMTLPFSLFVCF. A disordered region spans residues 443–505; sequence GNTPPPLQLA…QQGQQISSAM (63 aa). Positions 451–505 are enriched in low complexity; sequence LAPQQQMGQQQQPQYQQPQQQQQQYQPQQQQQQQQQQPQQQDQLYQQGQQISSAM.

It belongs to the band 7/mec-2 family.

The protein localises to the membrane. The polypeptide is Band 7 protein CG42540 (Drosophila melanogaster (Fruit fly)).